Reading from the N-terminus, the 793-residue chain is Endonuclease MutS2 (793 aa).

329–336 (GPNTGGKT) contacts ATP. The tract at residues 611 to 639 (LARARQAVEPTEEEQRARRRGEVPRGLKP) is disordered. Residues 623–639 (EEQRARRRGEVPRGLKP) are compositionally biased toward basic and acidic residues. Residues 717-792 (VDLRGLMVEE…GDGVTVAKLR (76 aa)) enclose the Smr domain.

This sequence belongs to the DNA mismatch repair MutS family. MutS2 subfamily. In terms of assembly, homodimer. Binds to stalled ribosomes, contacting rRNA.

In terms of biological role, endonuclease that is involved in the suppression of homologous recombination and thus may have a key role in the control of bacterial genetic diversity. Functionally, acts as a ribosome collision sensor, splitting the ribosome into its 2 subunits. Detects stalled/collided 70S ribosomes which it binds and splits by an ATP-hydrolysis driven conformational change. Acts upstream of the ribosome quality control system (RQC), a ribosome-associated complex that mediates the extraction of incompletely synthesized nascent chains from stalled ribosomes and their subsequent degradation. Probably generates substrates for RQC. The chain is Endonuclease MutS2 from Symbiobacterium thermophilum (strain DSM 24528 / JCM 14929 / IAM 14863 / T).